We begin with the raw amino-acid sequence, 650 residues long: Threonine--tRNA ligase (650 aa).

The TGS domain occupies 1–61; it reads MIKITFPDGA…DEDGTLEIVM (61 aa). The tract at residues 242 to 540 is catalytic; it reads DHRKLGKELD…LIETYKGAFP (299 aa). Residues Cys-336, His-387, and His-517 each contribute to the Zn(2+) site.

It belongs to the class-II aminoacyl-tRNA synthetase family. Homodimer. It depends on Zn(2+) as a cofactor.

It localises to the cytoplasm. The catalysed reaction is tRNA(Thr) + L-threonine + ATP = L-threonyl-tRNA(Thr) + AMP + diphosphate + H(+). Its function is as follows. Catalyzes the attachment of threonine to tRNA(Thr) in a two-step reaction: L-threonine is first activated by ATP to form Thr-AMP and then transferred to the acceptor end of tRNA(Thr). Also edits incorrectly charged L-seryl-tRNA(Thr). This chain is Threonine--tRNA ligase, found in Streptococcus suis (strain 98HAH33).